Consider the following 292-residue polypeptide: 4-hydroxy-tetrahydrodipicolinate synthase (292 aa).

Position 45 (threonine 45) interacts with pyruvate. Tyrosine 133 functions as the Proton donor/acceptor in the catalytic mechanism. Lysine 161 functions as the Schiff-base intermediate with substrate in the catalytic mechanism. Isoleucine 203 is a binding site for pyruvate.

Belongs to the DapA family. As to quaternary structure, homotetramer; dimer of dimers.

The protein resides in the cytoplasm. The enzyme catalyses L-aspartate 4-semialdehyde + pyruvate = (2S,4S)-4-hydroxy-2,3,4,5-tetrahydrodipicolinate + H2O + H(+). It participates in amino-acid biosynthesis; L-lysine biosynthesis via DAP pathway; (S)-tetrahydrodipicolinate from L-aspartate: step 3/4. Its function is as follows. Catalyzes the condensation of (S)-aspartate-beta-semialdehyde [(S)-ASA] and pyruvate to 4-hydroxy-tetrahydrodipicolinate (HTPA). This Sodalis glossinidius (strain morsitans) protein is 4-hydroxy-tetrahydrodipicolinate synthase.